The following is a 282-amino-acid chain: U1 small nuclear ribonucleoprotein A (282 aa).

Ala2 bears the N-acetylalanine mark. An RRM 1 domain is found at 10–89; it reads HTIYINNLNE…KPMRIQYAKT (80 aa). At Lys60 the chain carries N6-acetyllysine. A disordered region spans residues 101 to 141; it reads FVERDRKREKRKPKSQETPAAKKAVQGGAAAPVVGTVQGPV. A compositionally biased stretch (low complexity) spans 119–141; the sequence is PAAKKAVQGGAAAPVVGTVQGPV. At Arg152 the chain carries Omega-N-methylarginine. In terms of domain architecture, RRM 2 spans 208-282; that stretch reads HILFLTNLPE…NAMKISFAKK (75 aa).

Belongs to the RRM U1 A/B'' family. U1 snRNP is composed of the 7 core Sm proteins SNRPB, SNRPD1, SNRPD2, SNRPD3, SNRPE, SNRPF and SNRPG that assemble in a heptameric protein ring on the Sm site of the small nuclear RNA to form the core snRNP, and at least three U1 snRNP-specific proteins SNRNP70/U1-70K, SNRPA/U1-A and SNRPC/U1-C. Interacts with SFPQ; component of a snRNP-free complex with SFPQ.

The protein resides in the nucleus. Its function is as follows. Component of the spliceosomal U1 snRNP, which is essential for recognition of the pre-mRNA 5' splice-site and the subsequent assembly of the spliceosome. U1 snRNP is the first snRNP to interact with pre-mRNA. This interaction is required for the subsequent binding of U2 snRNP and the U4/U6/U5 tri-snRNP. SNRPA binds stem loop II of U1 snRNA. In a snRNP-free form (SF-A) may be involved in coupled pre-mRNA splicing and polyadenylation process. May bind preferentially to the 5'-UGCAC-3' motif on RNAs. This is U1 small nuclear ribonucleoprotein A (SNRPA) from Bos taurus (Bovine).